A 350-amino-acid polypeptide reads, in one-letter code: UDP-N-acetylenolpyruvoylglucosamine reductase (350 aa).

In terms of domain architecture, FAD-binding PCMH-type spans 24–195 (HVEATARWLL…VAVEFNLPLL (172 aa)). Arg-172 is a catalytic residue. Catalysis depends on Ser-245, which acts as the Proton donor. Glu-342 is a catalytic residue.

Belongs to the MurB family. Requires FAD as cofactor.

The protein localises to the cytoplasm. It carries out the reaction UDP-N-acetyl-alpha-D-muramate + NADP(+) = UDP-N-acetyl-3-O-(1-carboxyvinyl)-alpha-D-glucosamine + NADPH + H(+). It participates in cell wall biogenesis; peptidoglycan biosynthesis. In terms of biological role, cell wall formation. The protein is UDP-N-acetylenolpyruvoylglucosamine reductase of Xanthomonas euvesicatoria pv. vesicatoria (strain 85-10) (Xanthomonas campestris pv. vesicatoria).